The primary structure comprises 125 residues: Phosphoribosyl-AMP cyclohydrolase (125 aa).

Mg(2+) is bound at residue aspartate 74. Cysteine 75 contributes to the Zn(2+) binding site. Residues aspartate 76 and aspartate 78 each coordinate Mg(2+). Residues cysteine 92 and cysteine 99 each contribute to the Zn(2+) site.

The protein belongs to the PRA-CH family. As to quaternary structure, homodimer. Mg(2+) serves as cofactor. Requires Zn(2+) as cofactor.

The protein resides in the cytoplasm. The catalysed reaction is 1-(5-phospho-beta-D-ribosyl)-5'-AMP + H2O = 1-(5-phospho-beta-D-ribosyl)-5-[(5-phospho-beta-D-ribosylamino)methylideneamino]imidazole-4-carboxamide. The protein operates within amino-acid biosynthesis; L-histidine biosynthesis; L-histidine from 5-phospho-alpha-D-ribose 1-diphosphate: step 3/9. In terms of biological role, catalyzes the hydrolysis of the adenine ring of phosphoribosyl-AMP. The chain is Phosphoribosyl-AMP cyclohydrolase from Desulfatibacillum aliphaticivorans.